The chain runs to 275 residues: Homeobox protein Hox-C12a (275 aa).

2 disordered regions span residues 101–129 (SREN…DHGM) and 148–213 (QLTQ…KRKP). The span at 155–177 (SCQSMESDSSSSLLNEASKPSSS) shows a compositional bias: low complexity. Residues 178–194 (DTQTLVSPGSHTGTITA) show a composition bias toward polar residues. The segment at residues 207-266 (TRKKRKPYSKLQLAELEGEFMMNEFITRQRRRELSDRLNLSDQQVKIWFQNRRMKKKRLM) is a DNA-binding region (homeobox).

The protein belongs to the Abd-B homeobox family.

It localises to the nucleus. Its function is as follows. Sequence-specific transcription factor which is part of a developmental regulatory system that provides cells with specific positional identities on the anterior-posterior axis. In Takifugu rubripes (Japanese pufferfish), this protein is Homeobox protein Hox-C12a (hoxc12a).